The following is a 105-amino-acid chain: UPF0145 protein HD_1349 (105 aa).

This sequence belongs to the UPF0145 family.

The polypeptide is UPF0145 protein HD_1349 (Haemophilus ducreyi (strain 35000HP / ATCC 700724)).